Consider the following 689-residue polypeptide: Glycine--tRNA ligase beta subunit (689 aa).

This sequence belongs to the class-II aminoacyl-tRNA synthetase family. As to quaternary structure, tetramer of two alpha and two beta subunits.

It localises to the cytoplasm. The catalysed reaction is tRNA(Gly) + glycine + ATP = glycyl-tRNA(Gly) + AMP + diphosphate. The protein is Glycine--tRNA ligase beta subunit of Yersinia pseudotuberculosis serotype O:1b (strain IP 31758).